A 328-amino-acid polypeptide reads, in one-letter code: UPF0421 protein SAV1889 (328 aa).

The next 4 membrane-spanning stretches (helical) occupy residues 19-39, 61-81, 108-128, and 132-152; these read IAIF…IYAI, LPAT…FGDQ, VAVL…IFNF, and TLTA…VFPP.

It belongs to the UPF0421 family.

Its subcellular location is the cell membrane. This chain is UPF0421 protein SAV1889, found in Staphylococcus aureus (strain Mu50 / ATCC 700699).